The primary structure comprises 852 residues: DNA polymerase kappa (852 aa).

A UmuC domain is found at 102–357; the sequence is IVHVDMDAFY…LPIRKVSGIG (256 aa). Mg(2+) contacts are provided by Asp-106 and Asp-197. The disordered stretch occupies residues 252–273; that stretch reads FEDSPPDLQPQGSPFQLNSEEQ. Polar residues predominate over residues 261–273; sequence PQGSPFQLNSEEQ. 2 UBZ4-type zinc fingers span residues 619–649 and 761–791; these read TFIC…DGPS and ALVC…NKGI. Zn(2+) is bound by residues Cys-622, Cys-625, His-640, Cys-644, Cys-764, Cys-767, His-782, and Cys-786. Residues 798–852 are disordered; sequence SEGNSVKQPKESSRSTDRLQKASGRTKRPGTKTKSSTLKKTKPRDPRHTLDGFFK. Residues 805-817 are compositionally biased toward basic and acidic residues; the sequence is QPKESSRSTDRLQ. Residues 821–839 are compositionally biased toward basic residues; that stretch reads GRTKRPGTKTKSSTLKKTK. Over residues 840–852 the composition is skewed to basic and acidic residues; the sequence is PRDPRHTLDGFFK.

It belongs to the DNA polymerase type-Y family. In terms of assembly, interacts with PCNA. Interacts with REV1. Requires Mg(2+) as cofactor. It depends on Mn(2+) as a cofactor. As to expression, detected at low levels in heart, brain, lung, liver, kidney and testis.

The protein localises to the nucleus. It catalyses the reaction DNA(n) + a 2'-deoxyribonucleoside 5'-triphosphate = DNA(n+1) + diphosphate. In terms of biological role, DNA polymerase specifically involved in DNA repair. Plays an important role in translesion synthesis, where the normal high-fidelity DNA polymerases cannot proceed and DNA synthesis stalls. Depending on the context, it inserts the correct base, but causes frequent base transitions, transversions and frameshifts. Lacks 3'-5' proofreading exonuclease activity. Forms a Schiff base with 5'-deoxyribose phosphate at abasic sites, but does not have lyase activity. In Mus musculus (Mouse), this protein is DNA polymerase kappa (Polk).